The chain runs to 128 residues: Nitrogen fixation nifHD region GlnB-like protein 2 (128 aa).

This sequence belongs to the P(II) protein family.

Its function is as follows. Could be involved in the regulation of nitrogen fixation. The polypeptide is Nitrogen fixation nifHD region GlnB-like protein 2 (glnBB) (Methanothermococcus thermolithotrophicus (Methanococcus thermolithotrophicus)).